The chain runs to 369 residues: LIM homeobox transcription factor 1-beta (369 aa).

LIM zinc-binding domains lie at 23-73 and 82-135; these read CEGC…CKQD and CSGC…CKGD. The segment at 143-196 is disordered; it reads LSSVSPDESDSVKSEDEDGDMKPAKGQGSQSKGGGDDGKDPRRPKRPRTILTTQ. The homeobox DNA-binding region spans 186-245; it reads PKRPRTILTTQQRRAFKASFEVSSKPCRKVRETLAAETGLSVRVVQVWFQNQRAKMKKLA.

Interacts with DHX9.

Its subcellular location is the nucleus. In terms of biological role, transcription factor involved in the regulation of podocyte-expressed genes. Essential for the specification of dorsal limb fate at both the zeugopodal and autopodal levels. The sequence is that of LIM homeobox transcription factor 1-beta (LMX1B) from Mesocricetus auratus (Golden hamster).